Consider the following 948-residue polypeptide: Isoleucine--tRNA ligase (948 aa).

The 'HIGH' region signature appears at 58–68; the sequence is PYANGDIHIGH. L-isoleucyl-5'-AMP is bound at residue E566. Positions 607–611 match the 'KMSKS' region motif; that stretch reads KMSKS. Position 610 (K610) interacts with ATP. Residues C911, C914, C931, and C934 each coordinate Zn(2+).

It belongs to the class-I aminoacyl-tRNA synthetase family. IleS type 1 subfamily. As to quaternary structure, monomer. Zn(2+) serves as cofactor.

It localises to the cytoplasm. It catalyses the reaction tRNA(Ile) + L-isoleucine + ATP = L-isoleucyl-tRNA(Ile) + AMP + diphosphate. In terms of biological role, catalyzes the attachment of isoleucine to tRNA(Ile). As IleRS can inadvertently accommodate and process structurally similar amino acids such as valine, to avoid such errors it has two additional distinct tRNA(Ile)-dependent editing activities. One activity is designated as 'pretransfer' editing and involves the hydrolysis of activated Val-AMP. The other activity is designated 'posttransfer' editing and involves deacylation of mischarged Val-tRNA(Ile). This chain is Isoleucine--tRNA ligase, found in Vibrio vulnificus (strain CMCP6).